Reading from the N-terminus, the 433-residue chain is Succinate--CoA ligase [ADP-forming] subunit beta, mitochondrial (433 aa).

The N-terminal 23 residues, 1-23, are a transit peptide targeting the mitochondrion; that stretch reads MLTRSVLRKAPRAFSPFLQKRNL. In terms of domain architecture, ATP-grasp spans 31-273; it reads HDILRKFGVD…ISQEDPDEAR (243 aa). ATP-binding positions include K68, 75–77, and E136; that span reads GRG. Mg(2+)-binding residues include N228 and D242. Substrate contacts are provided by residues N293 and 350–352; that span reads GIV.

It belongs to the succinate/malate CoA ligase beta subunit family. In terms of assembly, heterodimer of an alpha and a beta subunit. Requires Mg(2+) as cofactor.

The protein localises to the mitochondrion. The enzyme catalyses succinate + ATP + CoA = succinyl-CoA + ADP + phosphate. The protein operates within carbohydrate metabolism; tricarboxylic acid cycle; succinate from succinyl-CoA (ligase route): step 1/1. In terms of biological role, succinyl-CoA synthetase functions in the citric acid cycle (TCA), coupling the hydrolysis of succinyl-CoA to the synthesis of ATP and thus represents the only step of substrate-level phosphorylation in the TCA. The beta subunit provides nucleotide specificity of the enzyme and binds the substrate succinate, while the binding sites for coenzyme A and phosphate are found in the alpha subunit. The protein is Succinate--CoA ligase [ADP-forming] subunit beta, mitochondrial of Schizosaccharomyces pombe (strain 972 / ATCC 24843) (Fission yeast).